The following is a 201-amino-acid chain: GTP-binding protein ryh1 (201 aa).

18–25 (GEQSVGKT) contacts GTP. Positions 40 to 48 (YQATIGIDF) match the Effector region motif. GTP contacts are provided by residues 66-70 (DTAGQ) and 124-127 (NKTD). Residues C199 and C201 are each lipidated (S-geranylgeranyl cysteine). C201 bears the Cysteine methyl ester mark.

It belongs to the small GTPase superfamily. Rab family.

It localises to the endosome membrane. It is found in the golgi apparatus membrane. Its subcellular location is the nucleus. The protein localises to the cytoplasm. The protein resides in the cytosol. In terms of biological role, has a role in retrograde traffricking of proteins from the endosome to the Golgi. Involved in protein transport to the plasma membrane. Involved in the secretory pathway where it has a role in acid phosphatase secretion. Required also in normal glycosylation trafficking pathways. In Schizosaccharomyces pombe (strain 972 / ATCC 24843) (Fission yeast), this protein is GTP-binding protein ryh1 (ryh1).